Here is a 361-residue protein sequence, read N- to C-terminus: Palmitoyltransferase ZDHHC16 (361 aa).

At 1–77 (MRGQRSLLLG…VYWLVDNVIR (77 aa)) the chain is on the cytoplasmic side. The chain crosses the membrane as a helical span at residues 78-98 (WFGVVFVVLVIVLTGSIVAIA). Over 99–116 (YLCVLPLILRTYSVPRLC) the chain is Lumenal. The chain crosses the membrane as a helical span at residues 117-137 (WHFFYSHWNLILIVFHYYQAI). The Cytoplasmic segment spans residues 138-198 (TTPPGYPPQG…NNCVGHYNHR (61 aa)). In terms of domain architecture, DHHC spans 155 to 205 (SICKKCIYPKPARTHHCSICNRCVLKMDHHCPWLNNCVGHYNHRYFFSFCF). Cysteine 185 acts as the S-palmitoyl cysteine intermediate in catalysis. Residues 199–219 (YFFSFCFFMTLGCVYCSYGSW) form a helical membrane-spanning segment. At 220 to 250 (DLFREAYAAIETYHQTPPPTFSFRERITHKS) the chain is on the lumenal side. The chain crosses the membrane as a helical span at residues 251–271 (LVYLWFLCSSVALALGALTMW). At 272 to 361 (HAVLISRGET…TAHSASVMAV (90 aa)) the chain is on the cytoplasmic side.

It belongs to the DHHC palmitoyltransferase family. Interacts with ABL1. Interacts with COPS5. Ubiquitously expressed.

It localises to the endoplasmic reticulum membrane. The catalysed reaction is L-cysteinyl-[protein] + hexadecanoyl-CoA = S-hexadecanoyl-L-cysteinyl-[protein] + CoA. Functionally, palmitoyl acyltransferase that mediates palmitoylation of proteins such as PLN and ZDHHC6. Required during embryonic heart development and cardiac function, possibly by mediating palmitoylation of PLN, thereby affecting PLN phosphorylation and homooligomerization. Also required for eye development. Palmitoylates ZDHHC6, affecting the quaternary assembly of ZDHHC6, its localization, stability and function. May play a role in DNA damage response. May be involved in apoptosis regulation. Involved in the proliferation of neural stem cells by regulating the FGF/ERK pathway. This Mus musculus (Mouse) protein is Palmitoyltransferase ZDHHC16.